Reading from the N-terminus, the 210-residue chain is dTTP/UTP pyrophosphatase (210 aa).

D85 functions as the Proton acceptor in the catalytic mechanism.

The protein belongs to the Maf family. YhdE subfamily. It depends on a divalent metal cation as a cofactor.

Its subcellular location is the cytoplasm. It carries out the reaction dTTP + H2O = dTMP + diphosphate + H(+). The catalysed reaction is UTP + H2O = UMP + diphosphate + H(+). In terms of biological role, nucleoside triphosphate pyrophosphatase that hydrolyzes dTTP and UTP. May have a dual role in cell division arrest and in preventing the incorporation of modified nucleotides into cellular nucleic acids. This chain is dTTP/UTP pyrophosphatase, found in Saccharophagus degradans (strain 2-40 / ATCC 43961 / DSM 17024).